A 220-amino-acid polypeptide reads, in one-letter code: Thiamine-phosphate synthase (220 aa).

4-amino-2-methyl-5-(diphosphooxymethyl)pyrimidine contacts are provided by residues Q38–K42 and N70. Mg(2+) contacts are provided by D71 and D90. T109 provides a ligand contact to 4-amino-2-methyl-5-(diphosphooxymethyl)pyrimidine. Position 135 to 137 (T135 to S137) interacts with 2-[(2R,5Z)-2-carboxy-4-methylthiazol-5(2H)-ylidene]ethyl phosphate. Residue K138 coordinates 4-amino-2-methyl-5-(diphosphooxymethyl)pyrimidine. 2-[(2R,5Z)-2-carboxy-4-methylthiazol-5(2H)-ylidene]ethyl phosphate-binding positions include G171 and I191–S192.

It belongs to the thiamine-phosphate synthase family. Mg(2+) serves as cofactor.

It carries out the reaction 2-[(2R,5Z)-2-carboxy-4-methylthiazol-5(2H)-ylidene]ethyl phosphate + 4-amino-2-methyl-5-(diphosphooxymethyl)pyrimidine + 2 H(+) = thiamine phosphate + CO2 + diphosphate. It catalyses the reaction 2-(2-carboxy-4-methylthiazol-5-yl)ethyl phosphate + 4-amino-2-methyl-5-(diphosphooxymethyl)pyrimidine + 2 H(+) = thiamine phosphate + CO2 + diphosphate. The enzyme catalyses 4-methyl-5-(2-phosphooxyethyl)-thiazole + 4-amino-2-methyl-5-(diphosphooxymethyl)pyrimidine + H(+) = thiamine phosphate + diphosphate. It participates in cofactor biosynthesis; thiamine diphosphate biosynthesis; thiamine phosphate from 4-amino-2-methyl-5-diphosphomethylpyrimidine and 4-methyl-5-(2-phosphoethyl)-thiazole: step 1/1. In terms of biological role, condenses 4-methyl-5-(beta-hydroxyethyl)thiazole monophosphate (THZ-P) and 2-methyl-4-amino-5-hydroxymethyl pyrimidine pyrophosphate (HMP-PP) to form thiamine monophosphate (TMP). The sequence is that of Thiamine-phosphate synthase from Agrobacterium fabrum (strain C58 / ATCC 33970) (Agrobacterium tumefaciens (strain C58)).